The chain runs to 848 residues: MFERFTDRARRVVVLAQEEARMLNHNYIGTEHILLGLIHEGEGVAAKSLESLGISLEGVRSQVEEIIGQGQQAPSGHIPFTPRAKKVLELSLREALQLGHNYIGTEHILLGLIREGEGVAAQVLVKLGAELTRVRQQVIQLLSGYQGKEAAEAGTGGRGGESGSPSTSLVLDQFGRNLTAAAMEGKLDPVIGREKEIERVMQVLSRRTKNNPVLIGEPGVGKTAVVEGLAQAIVHGEVPETLKDKQLYTLDLGSLVAGSRYRGDFEERLKKVLKEINTRGDIILFIDELHTLVGAGAAEGAIDAASILKPKLARGELQTIGATTLDEYRKYIEKDAALERRFQPVQVGEPTVEHTIEILKGLRDRYEAHHRVSITDAAMVAAATLADRYINDRFLPDKAIDLIDEAGARMRIRRMTAPPDLREFDEKIAEARREKESAIDAQDFEKAASLRDREKTLVAQRAEREKQWRSGDLDVVAEVDDEQIAEVLGNWTGIPVFKLTEAETTRLLRMEEELHKRIIGQEDAVKAVSKAIRRTRAGLKDPKRPSGSFIFAGPSGVGKTELSKALANFLFGDDDALIQIDMGEFHDRFTASRLFGAPPGYVGYEEGGQLTEKVRRKPFSVVLFDEIEKAHQEIYNSLLQVLEDGRLTDGQGRTVDFKNTVLIFTSNLGTSDISKPVGLGFSKGGGENDYERMKQKVNDELKKHFRPEFLNRIDDIIVFHQLTREEIIRMVDLMISRVAGQLKSKDMALVLTDAAKALLAKRGFDPVLGARPLRRTIQREIEDQLSEKILFEEVGPGQVVTVDVDNWDGEGPGEDAVFTFTGTRKPPAEPDLAKAGAHSAGGPEPAAR.

One can recognise a Clp R domain in the interval 2–144 (FERFTDRARR…RQQVIQLLSG (143 aa)). 2 repeat regions span residues 5-70 (FTDR…IGQG) and 80-144 (FTPR…LLSG). The i stretch occupies residues 171–418 (LDQFGRNLTA…RMRIRRMTAP (248 aa)). Position 216 to 223 (216 to 223 (GEPGVGKT)) interacts with ATP. A UVR domain is found at 425–460 (DEKIAEARREKESAIDAQDFEKAASLRDREKTLVAQ). The tract at residues 479–670 (VDDEQIAEVL…VLIFTSNLGT (192 aa)) is II. 553–560 (GPSGVGKT) lines the ATP pocket. Residues 821-848 (TGTRKPPAEPDLAKAGAHSAGGPEPAAR) are disordered.

It belongs to the ClpA/ClpB family. ClpC subfamily.

Its function is as follows. ATP-dependent specificity component of the Clp protease. It directs the protease to specific substrates. Can perform chaperone functions in the absence of ClpP. Degrades anti-sigma-E factor RseA in the presence of ClpP2. The polypeptide is ATP-dependent Clp protease ATP-binding subunit ClpC1 (clpC1) (Mycobacterium tuberculosis (strain ATCC 25618 / H37Rv)).